The chain runs to 228 residues: L-ribulose-5-phosphate 4-epimerase UlaF (228 aa).

Substrate is bound by residues 26–27 (GN), 43–44 (SG), and 72–73 (SS). Residues Asp-74, His-93, and His-95 each contribute to the Zn(2+) site. The active-site Proton donor/acceptor is Asp-118. His-167 contacts Zn(2+). Tyr-225 acts as the Proton donor/acceptor in catalysis.

It belongs to the aldolase class II family. AraD/FucA subfamily. Zn(2+) is required as a cofactor.

It carries out the reaction L-ribulose 5-phosphate = D-xylulose 5-phosphate. It functions in the pathway cofactor degradation; L-ascorbate degradation; D-xylulose 5-phosphate from L-ascorbate: step 4/4. Functionally, catalyzes the isomerization of L-ribulose 5-phosphate to D-xylulose 5-phosphate. Is involved in the anaerobic L-ascorbate utilization. The polypeptide is L-ribulose-5-phosphate 4-epimerase UlaF (Salmonella choleraesuis (strain SC-B67)).